The sequence spans 359 residues: DNA integrity scanning protein DisA (359 aa).

A DAC domain is found at 7–145 (DDIFRATLAA…AGRRYVLDGA (139 aa)). Residues glycine 74, leucine 92, and 105–109 (TRHRT) contribute to the ATP site.

Belongs to the DisA family. As to quaternary structure, homooctamer. The cofactor is Mg(2+).

The enzyme catalyses 2 ATP = 3',3'-c-di-AMP + 2 diphosphate. Its function is as follows. Participates in a DNA-damage check-point that is active prior to asymmetric division when DNA is damaged. DisA forms globular foci that rapidly scan along the chromosomes during sporulation, searching for lesions. When a lesion is present, DisA pauses at the lesion site. This triggers a cellular response that culminates in a temporary block in sporulation initiation. Also has diadenylate cyclase activity, catalyzing the condensation of 2 ATP molecules into cyclic di-AMP (c-di-AMP). c-di-AMP acts as a signaling molecule that couples DNA integrity with progression of sporulation. The rise in c-di-AMP level generated by DisA while scanning the chromosome, operates as a positive signal that advances sporulation; upon encountering a lesion, the DisA focus arrests at the damaged site and halts c-di-AMP synthesis. The sequence is that of DNA integrity scanning protein DisA from Parafrankia sp. (strain EAN1pec).